Reading from the N-terminus, the 147-residue chain is UPF0178 protein CV_1768 (147 aa).

The protein belongs to the UPF0178 family.

The polypeptide is UPF0178 protein CV_1768 (Chromobacterium violaceum (strain ATCC 12472 / DSM 30191 / JCM 1249 / CCUG 213 / NBRC 12614 / NCIMB 9131 / NCTC 9757 / MK)).